Reading from the N-terminus, the 196-residue chain is Mediator of RNA polymerase II transcription subunit 21 (196 aa).

Residues 52–111 (KIPKNASTPPVPASAPQAAQSQSQASPPPPDTANPQTGGQHADQQQQSPDGEGLPAPDSP) form a disordered region. Composition is skewed to low complexity over residues 65 to 76 (SAPQAAQSQSQA) and 87 to 98 (QTGGQHADQQQQ). A coiled-coil region spans residues 144–174 (SSEAEQERRIRELEGELRIVEGVREERRREL).

Belongs to the Mediator complex subunit 21 family. In terms of assembly, component of the Mediator complex.

It is found in the nucleus. Its function is as follows. Component of the Mediator complex, a coactivator involved in the regulated transcription of nearly all RNA polymerase II-dependent genes. Mediator functions as a bridge to convey information from gene-specific regulatory proteins to the basal RNA polymerase II transcription machinery. Mediator is recruited to promoters by direct interactions with regulatory proteins and serves as a scaffold for the assembly of a functional preinitiation complex with RNA polymerase II and the general transcription factors. The sequence is that of Mediator of RNA polymerase II transcription subunit 21 (srb7) from Aspergillus niger (strain ATCC MYA-4892 / CBS 513.88 / FGSC A1513).